The primary structure comprises 829 residues: Cadherin-3 (829 aa).

A signal peptide spans 1–24 (MGLPRGPLASLLLLQVCWLQCAAS). A propeptide spanning residues 25 to 107 (EPCRAVFREA…SKRILRRHKR (83 aa)) is cleaved from the precursor. Cadherin domains follow at residues 108 to 215 (DWVV…KPKF), 216 to 328 (TQDT…APMF), 329 to 440 (DPQK…APVF), 441 to 546 (VPPS…DHGP), and 547 to 650 (VPEP…CPGP). The Extracellular portion of the chain corresponds to 108–654 (DWVVAPISVP…ETCPGPWKGG (547 aa)). Asn-200 is a glycosylation site (N-linked (GlcNAc...) asparagine). N-linked (GlcNAc...) asparagine glycosylation occurs at Asn-566. Residues 655 to 677 (FILPVLGAVLALLFLLLVLLLLV) form a helical membrane-spanning segment. Over 678–829 (RKKRKIKEPL…ADMYGGGEDD (152 aa)) the chain is Cytoplasmic.

As to quaternary structure, interacts with CDCP1 and CTNNB1. As to expression, expressed in some normal epithelial tissues and in some carcinoma cell lines.

It localises to the cell membrane. Cadherins are calcium-dependent cell adhesion proteins. They preferentially interact with themselves in a homophilic manner in connecting cells; cadherins may thus contribute to the sorting of heterogeneous cell types. This Homo sapiens (Human) protein is Cadherin-3 (CDH3).